The following is a 248-amino-acid chain: DNA repair protein RecO (248 aa).

It belongs to the RecO family.

Involved in DNA repair and RecF pathway recombination. This is DNA repair protein RecO from Bartonella tribocorum (strain CIP 105476 / IBS 506).